The following is a 365-amino-acid chain: Geranylgeranyl pyrophosphate synthase (365 aa).

Residues 1–11 (MKPLPSTNGKV) are compositionally biased toward polar residues. Positions 1–36 (MKPLPSTNGKVNGNGKHHDSSLSSTSSTSSSSSSDT) are disordered. The segment covering 21 to 34 (SLSSTSSTSSSSSS) has biased composition (low complexity). Lys78, Arg81, and His110 together coordinate isopentenyl diphosphate. Positions 117 and 121 each coordinate Mg(2+). Arg126 serves as a coordination point for dimethylallyl diphosphate. Arg127 is an isopentenyl diphosphate binding site. 3 residues coordinate dimethylallyl diphosphate: Lys211, Thr212, and Gln247. Asp250 lines the Mg(2+) pocket. Dimethylallyl diphosphate-binding residues include Asn254, Lys263, and Lys273.

The protein belongs to the FPP/GGPP synthase family. Mg(2+) is required as a cofactor.

It carries out the reaction isopentenyl diphosphate + dimethylallyl diphosphate = (2E)-geranyl diphosphate + diphosphate. It catalyses the reaction isopentenyl diphosphate + (2E)-geranyl diphosphate = (2E,6E)-farnesyl diphosphate + diphosphate. The enzyme catalyses isopentenyl diphosphate + (2E,6E)-farnesyl diphosphate = (2E,6E,10E)-geranylgeranyl diphosphate + diphosphate. Geranylgeranyl pyrophosphate synthase that catalyzes the trans-addition of the three molecules of IPP onto DMAPP to form geranylgeranyl pyrophosphate. Does not show any monoterpene nor sesquiterpene synthase activity. The protein is Geranylgeranyl pyrophosphate synthase of Melampsora lini (Rust fungus).